The following is a 512-amino-acid chain: Dihydroniloticin synthase CYP71CD1 (512 aa).

Residues tyrosine 7 to tryptophan 27 traverse the membrane as a helical segment. Position 451 (cysteine 451) interacts with heme.

The protein belongs to the cytochrome P450 family. Heme serves as cofactor. Accumulates in mature fruits and in juice vesicles.

It localises to the membrane. The catalysed reaction is tirucalla-7,24-dien-3beta-ol + 2 reduced [NADPH--hemoprotein reductase] + 2 O2 = dihydroniloticin + 2 oxidized [NADPH--hemoprotein reductase] + 2 H2O + 2 H(+). The protein operates within secondary metabolite biosynthesis; terpenoid biosynthesis. Its function is as follows. Monooxygenase involved in the biosynthesis of limonoids triterpene natural products such as limonin, a compound with insecticidal activity responsible for the bitter taste in citrus. Catalyzes the conversion of tirucalladienol to dihydroniloticin. The sequence is that of Dihydroniloticin synthase CYP71CD1 from Citrus sinensis (Sweet orange).